A 159-amino-acid chain; its full sequence is 3-hydroxyacyl-[acyl-carrier-protein] dehydratase FabZ (159 aa).

Residue H58 is part of the active site.

The protein belongs to the thioester dehydratase family. FabZ subfamily.

Its subcellular location is the cytoplasm. It catalyses the reaction a (3R)-hydroxyacyl-[ACP] = a (2E)-enoyl-[ACP] + H2O. Involved in unsaturated fatty acids biosynthesis. Catalyzes the dehydration of short chain beta-hydroxyacyl-ACPs and long chain saturated and unsaturated beta-hydroxyacyl-ACPs. This is 3-hydroxyacyl-[acyl-carrier-protein] dehydratase FabZ from Helicobacter pylori (strain Shi470).